We begin with the raw amino-acid sequence, 451 residues long: Phosphoglucosamine mutase (451 aa).

The Phosphoserine intermediate role is filled by serine 101. The Mg(2+) site is built by serine 101, aspartate 243, aspartate 245, and aspartate 247. Residue serine 101 is modified to Phosphoserine.

The protein belongs to the phosphohexose mutase family. It depends on Mg(2+) as a cofactor. Post-translationally, activated by phosphorylation.

The catalysed reaction is alpha-D-glucosamine 1-phosphate = D-glucosamine 6-phosphate. Its function is as follows. Catalyzes the conversion of glucosamine-6-phosphate to glucosamine-1-phosphate. This is Phosphoglucosamine mutase from Geobacter metallireducens (strain ATCC 53774 / DSM 7210 / GS-15).